A 205-amino-acid chain; its full sequence is Adenylyl-sulfate kinase (205 aa).

Position 31 to 38 (31 to 38) interacts with ATP; the sequence is GLSGAGKS. Residue Ser105 is the Phosphoserine intermediate of the active site.

It belongs to the APS kinase family.

The catalysed reaction is adenosine 5'-phosphosulfate + ATP = 3'-phosphoadenylyl sulfate + ADP + H(+). It functions in the pathway sulfur metabolism; hydrogen sulfide biosynthesis; sulfite from sulfate: step 2/3. Catalyzes the synthesis of activated sulfate. This Shewanella baltica (strain OS155 / ATCC BAA-1091) protein is Adenylyl-sulfate kinase.